Consider the following 608-residue polypeptide: V-type ATP synthase subunit I (608 aa).

9 helical membrane passes run 308–325 (ISFI…MIIG), 327–346 (AAYG…SFLL), 356–376 (GLIF…GTWF), 405–425 (IIFI…VWNF), 438–458 (IAQI…LNLI), 464–484 (FPMY…VFVF), 495–515 (CILK…SGFA), 517–537 (IISY…SASF), and 550–570 (IGLI…NIML).

This sequence belongs to the V-ATPase 116 kDa subunit family.

The protein localises to the cell membrane. Functionally, produces ATP from ADP in the presence of a proton gradient across the membrane. This is V-type ATP synthase subunit I (atpI) from Borreliella burgdorferi (strain ATCC 35210 / DSM 4680 / CIP 102532 / B31) (Borrelia burgdorferi).